We begin with the raw amino-acid sequence, 192 residues long: HTH-type transcriptional repressor SCO4008 (192 aa).

The HTH tetR-type domain occupies 7-67; sequence EATKARIFEA…SVLEKKMLDL (61 aa). The H-T-H motif DNA-binding region spans 30–49; the sequence is RIDRIAAEARANKQLIYAYY.

Homodimer. Four dimers bind to the two operator sites.

With respect to regulation, binding of a wide range of cationic hydrophobic compounds to SCO4008 causes a decrease in DNA-binding, probably via allosteric conformational change of SCO4008. Probably regulates the expression of its own gene and the adjacent SCO4007 gene by binding to two operator sites in the SCO4007-SCO4008 intergenic region. The polypeptide is HTH-type transcriptional repressor SCO4008 (Streptomyces coelicolor (strain ATCC BAA-471 / A3(2) / M145)).